The primary structure comprises 276 residues: Expansin-A25 (276 aa).

The first 27 residues, 1–27 (MKLLEQMVYVECFMIIMATLLVSMSYG), serve as a signal peptide directing secretion. The Expansin-like EG45 domain occupies 73–183 (QGACGYGDLF…RRISCARTGG (111 aa)). The Expansin-like CBD domain maps to 193-272 (YFLMILPYNV…NWGFGQTFDG (80 aa)).

It belongs to the expansin family. Expansin A subfamily.

It is found in the secreted. The protein resides in the cell wall. The protein localises to the membrane. In terms of biological role, causes loosening and extension of plant cell walls by disrupting non-covalent bonding between cellulose microfibrils and matrix glucans. No enzymatic activity has been found. This chain is Expansin-A25 (EXPA25), found in Arabidopsis thaliana (Mouse-ear cress).